A 185-amino-acid chain; its full sequence is Ribosome-recycling factor (185 aa).

The protein belongs to the RRF family.

It is found in the cytoplasm. Responsible for the release of ribosomes from messenger RNA at the termination of protein biosynthesis. May increase the efficiency of translation by recycling ribosomes from one round of translation to another. This is Ribosome-recycling factor from Geobacter sp. (strain M21).